A 487-amino-acid polypeptide reads, in one-letter code: Homoserine O-acetyltransferase (487 aa).

The 308-residue stretch at 45 to 352 (NVILVCHPLT…PHGHDGFLLE (308 aa)) folds into the AB hydrolase-1 domain. Residue Ser150 is the Nucleophile of the active site. Residue Arg219 coordinates substrate. Active-site residues include Asp313 and His346. Asp347 serves as a coordination point for substrate. CBS domains are found at residues 373-430 (MTNN…FQDL) and 434-487 (MTKD…EVLQ).

It belongs to the AB hydrolase superfamily. MetX family. Homodimer.

Its subcellular location is the cytoplasm. It catalyses the reaction L-homoserine + acetyl-CoA = O-acetyl-L-homoserine + CoA. It functions in the pathway amino-acid biosynthesis; L-methionine biosynthesis via de novo pathway; O-acetyl-L-homoserine from L-homoserine: step 1/1. Transfers an acetyl group from acetyl-CoA to L-homoserine, forming acetyl-L-homoserine. The protein is Homoserine O-acetyltransferase of Methanocorpusculum labreanum (strain ATCC 43576 / DSM 4855 / Z).